A 457-amino-acid polypeptide reads, in one-letter code: Phosphomethylpyrimidine synthase (457 aa).

Residues Asn-81, Met-110, Tyr-139, His-175, 195-197 (SRG), 236-239 (DALR), and Glu-275 each bind substrate. A Zn(2+)-binding site is contributed by His-279. Tyr-302 is a substrate binding site. A Zn(2+)-binding site is contributed by His-343. Residues Cys-423, Cys-426, and Cys-431 each contribute to the [4Fe-4S] cluster site.

It belongs to the ThiC family. It depends on [4Fe-4S] cluster as a cofactor.

It catalyses the reaction 5-amino-1-(5-phospho-beta-D-ribosyl)imidazole + S-adenosyl-L-methionine = 4-amino-2-methyl-5-(phosphooxymethyl)pyrimidine + CO + 5'-deoxyadenosine + formate + L-methionine + 3 H(+). The protein operates within cofactor biosynthesis; thiamine diphosphate biosynthesis. Catalyzes the synthesis of the hydroxymethylpyrimidine phosphate (HMP-P) moiety of thiamine from aminoimidazole ribotide (AIR) in a radical S-adenosyl-L-methionine (SAM)-dependent reaction. This Aquifex aeolicus (strain VF5) protein is Phosphomethylpyrimidine synthase.